We begin with the raw amino-acid sequence, 262 residues long: Indole-3-glycerol phosphate synthase (262 aa).

Belongs to the TrpC family.

The catalysed reaction is 1-(2-carboxyphenylamino)-1-deoxy-D-ribulose 5-phosphate + H(+) = (1S,2R)-1-C-(indol-3-yl)glycerol 3-phosphate + CO2 + H2O. It participates in amino-acid biosynthesis; L-tryptophan biosynthesis; L-tryptophan from chorismate: step 4/5. The polypeptide is Indole-3-glycerol phosphate synthase (Bordetella bronchiseptica (strain ATCC BAA-588 / NCTC 13252 / RB50) (Alcaligenes bronchisepticus)).